The chain runs to 224 residues: Large ribosomal subunit protein uL1 (224 aa).

The protein belongs to the universal ribosomal protein uL1 family. As to quaternary structure, part of the 50S ribosomal subunit.

Binds directly to 23S rRNA. The L1 stalk is quite mobile in the ribosome, and is involved in E site tRNA release. Its function is as follows. Protein L1 is also a translational repressor protein, it controls the translation of the L11 operon by binding to its mRNA. The protein is Large ribosomal subunit protein uL1 of Borrelia recurrentis (strain A1).